We begin with the raw amino-acid sequence, 831 residues long: Periplasmic nitrate reductase (831 aa).

A signal peptide (tat-type signal) is located at residues 1 to 31 (MTISRRDLLKAQAAGIAAMAANIPLSSQAPA). Residues 41 to 97 (ITWSKAPCRFCGTGCGVMVGVKEGRVVATHGDLLAEVNRGLNCVKGYFLSKIMYGAD) enclose the 4Fe-4S Mo/W bis-MGD-type domain. The [4Fe-4S] cluster site is built by Cys48, Cys51, Cys55, and Cys83. Residues Lys85, Gln152, Asn177, Cys181, 214 to 221 (WGSNMAEM), 245 to 249 (STFTH), 264 to 266 (GTD), Met375, Gln379, Asn485, 511 to 512 (SD), Lys534, Asp561, and 721 to 730 (TGRVLEHWHS) each bind Mo-bis(molybdopterin guanine dinucleotide). Residue Trp797 coordinates substrate. Residues Asn805 and Lys822 each coordinate Mo-bis(molybdopterin guanine dinucleotide).

This sequence belongs to the prokaryotic molybdopterin-containing oxidoreductase family. NasA/NapA/NarB subfamily. In terms of assembly, component of the periplasmic nitrate reductase NapAB complex composed of NapA and NapB. [4Fe-4S] cluster serves as cofactor. Requires Mo-bis(molybdopterin guanine dinucleotide) as cofactor. Predicted to be exported by the Tat system. The position of the signal peptide cleavage has not been experimentally proven.

Its subcellular location is the periplasm. It catalyses the reaction 2 Fe(II)-[cytochrome] + nitrate + 2 H(+) = 2 Fe(III)-[cytochrome] + nitrite + H2O. In terms of biological role, catalytic subunit of the periplasmic nitrate reductase complex NapAB. Receives electrons from NapB and catalyzes the reduction of nitrate to nitrite. The polypeptide is Periplasmic nitrate reductase (Paracoccus pantotrophus (Thiosphaera pantotropha)).